We begin with the raw amino-acid sequence, 338 residues long: Glycerol-3-phosphate dehydrogenase [NAD(P)+] (338 aa).

Positions 13, 14, and 108 each coordinate NADPH. Sn-glycerol 3-phosphate contacts are provided by Lys-108, Gly-139, and Ser-141. Residue Ala-143 coordinates NADPH. Positions 194, 247, 257, 258, and 259 each coordinate sn-glycerol 3-phosphate. The active-site Proton acceptor is the Lys-194. NADPH is bound at residue Arg-258. Residues Val-282 and Glu-284 each contribute to the NADPH site.

The protein belongs to the NAD-dependent glycerol-3-phosphate dehydrogenase family.

Its subcellular location is the cytoplasm. The enzyme catalyses sn-glycerol 3-phosphate + NAD(+) = dihydroxyacetone phosphate + NADH + H(+). The catalysed reaction is sn-glycerol 3-phosphate + NADP(+) = dihydroxyacetone phosphate + NADPH + H(+). The protein operates within membrane lipid metabolism; glycerophospholipid metabolism. Catalyzes the reduction of the glycolytic intermediate dihydroxyacetone phosphate (DHAP) to sn-glycerol 3-phosphate (G3P), the key precursor for phospholipid synthesis. This is Glycerol-3-phosphate dehydrogenase [NAD(P)+] from Streptococcus pyogenes serotype M28 (strain MGAS6180).